A 185-amino-acid chain; its full sequence is Ribosome-recycling factor (185 aa).

This sequence belongs to the RRF family.

It is found in the cytoplasm. Its function is as follows. Responsible for the release of ribosomes from messenger RNA at the termination of protein biosynthesis. May increase the efficiency of translation by recycling ribosomes from one round of translation to another. The protein is Ribosome-recycling factor of Pseudomonas savastanoi pv. phaseolicola (strain 1448A / Race 6) (Pseudomonas syringae pv. phaseolicola (strain 1448A / Race 6)).